A 570-amino-acid polypeptide reads, in one-letter code: Periplasmic trehalase (570 aa).

A signal peptide spans 1–34; that stretch reads MIPPEIRRSVLLQKAIKLALAGTLLTFASFSATA. Residues Arg-159, 166-167, Asn-203, 212-214, 284-286, and Gly-317 contribute to the substrate site; these read WD, RSQ, and RPE. Catalysis depends on proton donor/acceptor residues Asp-319 and Glu-503. Position 518 (Glu-518) interacts with substrate. Residues 544–570 form a disordered region; sequence KPCDSVPSTRPASLSATPTKTPSAATQ. The segment covering 554 to 570 has biased composition (low complexity); the sequence is PASLSATPTKTPSAATQ.

This sequence belongs to the glycosyl hydrolase 37 family. As to quaternary structure, monomer.

The protein localises to the periplasm. The enzyme catalyses alpha,alpha-trehalose + H2O = alpha-D-glucose + beta-D-glucose. In terms of biological role, provides the cells with the ability to utilize trehalose at high osmolarity by splitting it into glucose molecules that can subsequently be taken up by the phosphotransferase-mediated uptake system. In Salmonella newport (strain SL254), this protein is Periplasmic trehalase.